Consider the following 123-residue polypeptide: MARIPLLLALLLAVSAAAAAQVGGNRGHGPLVGGWSPITDVGDPHIQELGGWAVERHASLSSDGLRFRRVTSGEQQVVSGMNYRLVVSASDPAGATASYVAVVYEQSWTNTRQLTSFKPAAAH.

The first 19 residues, 1–19 (MARIPLLLALLLAVSAAAA), serve as a signal peptide directing secretion. One can recognise a Cystatin domain in the interval 33–91 (GGWSPITDVGDPHIQELGGWAVERHASLSSDGLRFRRVTSGEQQVVSGMNYRLVVSASD). The short motif at 76–80 (QVVSG) is the Secondary area of contact element.

It belongs to the cystatin family. Phytocystatin subfamily.

Its subcellular location is the secreted. Functionally, specific inhibitor of cysteine proteinases. Probably involved in the regulation of endogenous processes and in defense against pests and pathogens. The protein is Cysteine proteinase inhibitor 8 of Oryza sativa subsp. japonica (Rice).